The following is a 77-amino-acid chain: Coiled-coil-helix-coiled-coil-helix domain-containing protein C550.01c (77 aa).

One can recognise a CHCH domain in the interval lysine 24–leucine 65. Short sequence motifs (cx9C motif) lie at residues cysteine 27–cysteine 37 and cysteine 47–cysteine 57. Intrachain disulfides connect cysteine 27–cysteine 57 and cysteine 37–cysteine 47.

It is found in the cytoplasm. It localises to the nucleus. The chain is Coiled-coil-helix-coiled-coil-helix domain-containing protein C550.01c from Schizosaccharomyces pombe (strain 972 / ATCC 24843) (Fission yeast).